The sequence spans 754 residues: 5-methyltetrahydropteroyltriglutamate--homocysteine methyltransferase (754 aa).

Residues 17-20 and Lys117 contribute to the 5-methyltetrahydropteroyltri-L-glutamate site; that span reads RELK. Residues 431 to 433 and Glu484 each bind L-homocysteine; that span reads IGS. L-methionine-binding positions include 431–433 and Glu484; that span reads IGS. 5-methyltetrahydropteroyltri-L-glutamate is bound by residues 515-516 and Trp561; that span reads RC. Asp599 provides a ligand contact to L-homocysteine. Asp599 is an L-methionine binding site. 5-methyltetrahydropteroyltri-L-glutamate is bound at residue Glu605. The Zn(2+) site is built by His641, Cys643, and Glu665. The Proton donor role is filled by His694. Residue Cys726 coordinates Zn(2+).

It belongs to the vitamin-B12 independent methionine synthase family. The cofactor is Zn(2+).

The catalysed reaction is 5-methyltetrahydropteroyltri-L-glutamate + L-homocysteine = tetrahydropteroyltri-L-glutamate + L-methionine. The protein operates within amino-acid biosynthesis; L-methionine biosynthesis via de novo pathway; L-methionine from L-homocysteine (MetE route): step 1/1. Its function is as follows. Catalyzes the transfer of a methyl group from 5-methyltetrahydrofolate to homocysteine resulting in methionine formation. The polypeptide is 5-methyltetrahydropteroyltriglutamate--homocysteine methyltransferase (Salmonella choleraesuis (strain SC-B67)).